We begin with the raw amino-acid sequence, 241 residues long: Methylcarbamoylase mom (241 aa).

Tyr-59, Asp-149, and Tyr-159 together coordinate Fe cation.

Belongs to the mulikevirus mom protein family. Fe(2+) is required as a cofactor. Requires Fe(3+) as cofactor.

It localises to the host cytoplasm. The catalysed reaction is a 2'-deoxyadenosine in DNA + acetyl-CoA + AH2 + NH4(+) + O2 = a N(6)-methylcarbamoyl-2'-deoxyadenosine in DNA + A + CoA + 2 H2O + H(+). In terms of biological role, iron-binding protein that performs methylcarbamoylation of adenine using acetyl CoA. This chemical modificaltion makes the viral DNA resistant to a variety of host type I and type II restriction enzymes by modifying approximately 15% of DNA adenine residues. The modification called momylation changes adenine for N6-methylcarbamoyl adenine and occurs just before packaging. Target sequences are 5'-(C or G)-A-(Cor G)-N-(C or T)-3'. Also usually modifies adenine residues in the host cellular DNA. The protein is Methylcarbamoylase mom (mom) of Escherichia phage Mu (Bacteriophage Mu).